We begin with the raw amino-acid sequence, 367 residues long: Testis-specific serine/threonine-protein kinase 1 (367 aa).

One can recognise a Protein kinase domain in the interval 12–272 (YLLGINLGEG…IDEILSHCWM (261 aa)). ATP contacts are provided by residues 18–26 (LGEGSYAKV) and Lys-41. Asp-136 acts as the Proton acceptor in catalysis. Phosphothreonine is present on Thr-174. The interval 276-367 (ARGSPSVAIN…PQQPPETRAQ (92 aa)) is disordered. Over residues 303–314 (GSDKKSATKLEP) the composition is skewed to basic and acidic residues.

This sequence belongs to the protein kinase superfamily. CAMK Ser/Thr protein kinase family. As to quaternary structure, interacts with TSSK2. Interacts with HSP90; this interaction stabilizes TSSK1. Requires Mg(2+) as cofactor. Post-translationally, autophosphorylated. Ubiquitinated; HSP90 activity negatively regulates ubiquitination and degradation. Testis-specific. Present in sperm (at protein level).

The protein resides in the cytoplasm. The protein localises to the cytoplasmic vesicle. Its subcellular location is the secretory vesicle. It is found in the acrosome. It localises to the cell projection. The protein resides in the cilium. The protein localises to the flagellum. The enzyme catalyses L-seryl-[protein] + ATP = O-phospho-L-seryl-[protein] + ADP + H(+). It catalyses the reaction L-threonyl-[protein] + ATP = O-phospho-L-threonyl-[protein] + ADP + H(+). With respect to regulation, kinase activity is specifically inhibited by 2 classes of compounds: biphenyl compounds (1,1'-(biphenyl-4,4'-diyl)bis(2,2-dihydroxyethanone)) and 1,2,7-trialky-1H-imidazo[4,5-g]quinoxalin-6-one. Activated by phosphorylation on Thr-174 and potentially by autophosphorylation. Functionally, testis-specific serine/threonine-protein kinase required during spermatid development. Phosphorylates 'Ser-288' of TSKS. Involved in the late stages of spermatogenesis, during the reconstruction of the cytoplasm. During spermatogenesis, required for the transformation of a ring-shaped structure around the base of the flagellum originating from the chromatoid body. This is Testis-specific serine/threonine-protein kinase 1 (TSSK1B) from Homo sapiens (Human).